Consider the following 51-residue polypeptide: Ribosome biogenesis protein Nop10 (51 aa).

This sequence belongs to the NOP10 family.

Functionally, involved in ribosome biogenesis; more specifically in 18S rRNA pseudouridylation and in cleavage of pre-rRNA. This is Ribosome biogenesis protein Nop10 from Methanococcus aeolicus (strain ATCC BAA-1280 / DSM 17508 / OCM 812 / Nankai-3).